The primary structure comprises 335 residues: MSLDINHIALHQLIKRDEQNLELVLRDSLLEPTETVVEMVAELHRVYSAKNKAYGLFSEESELAQTLRLQRQGEEDFLAFSRAATGRLRDELAKYPFADGGFVLFCHYRYLAVEYLLVAVLSNLSSMRVNENLDINPTHYLDINHADIVARIDLTEWETNPESTRYLTFLKGRVGRKVADFFMDFLGASEGLNAKAQNRGLLQAVDDFTAEAQLDKAERQNVRQQVYSYCNEQLQAGEEIELESLSKELAGVSEVSFTEFAAEKGYELEESFPADRSTLRQLTKFAGSGGGLTINFDAMLLGERIFWDPATDTLTIKGTPPNLRDQLQRRTSGGN.

This sequence belongs to the YejK family.

It is found in the cytoplasm. It localises to the nucleoid. This is Nucleoid-associated protein YejK from Shigella flexneri.